The chain runs to 299 residues: Nucleotide-binding protein Moth_0258 (299 aa).

Residue 14-21 (GLSGAGKT) participates in ATP binding. A GTP-binding site is contributed by 68 to 71 (DIRG).

This sequence belongs to the RapZ-like family.

Functionally, displays ATPase and GTPase activities. In Moorella thermoacetica (strain ATCC 39073 / JCM 9320), this protein is Nucleotide-binding protein Moth_0258.